A 118-amino-acid chain; its full sequence is Mu-like prophage FluMu tail tube protein (118 aa).

Residues arginine 12–glutamate 32 form a disordered region.

To phage Mu protein M.

This Haemophilus influenzae (strain ATCC 51907 / DSM 11121 / KW20 / Rd) protein is Mu-like prophage FluMu tail tube protein.